A 232-amino-acid chain; its full sequence is Ribonuclease 3 (232 aa).

Residues 5 to 134 form the RNase III domain; the sequence is QTVLKNHFEI…FLGALLLDKD (130 aa). E47 provides a ligand contact to Mg(2+). Residue D51 is part of the active site. 2 residues coordinate Mg(2+): D120 and E123. Residue E123 is part of the active site. The region spanning 160 to 229 is the DRBM domain; it reads DYKTHLQELL…AKNAVEKGLD (70 aa).

Belongs to the ribonuclease III family. As to quaternary structure, homodimer. It depends on Mg(2+) as a cofactor.

It localises to the cytoplasm. The catalysed reaction is Endonucleolytic cleavage to 5'-phosphomonoester.. Functionally, digests double-stranded RNA. Involved in the processing of primary rRNA transcript to yield the immediate precursors to the large and small rRNAs (23S and 16S). Processes some mRNAs, and tRNAs when they are encoded in the rRNA operon. Processes pre-crRNA and tracrRNA of type II CRISPR loci if present in the organism. The chain is Ribonuclease 3 from Streptococcus pneumoniae (strain ATCC BAA-255 / R6).